We begin with the raw amino-acid sequence, 294 residues long: ATP phosphoribosyltransferase (294 aa).

It belongs to the ATP phosphoribosyltransferase family. Long subfamily. Requires Mg(2+) as cofactor.

It localises to the cytoplasm. It carries out the reaction 1-(5-phospho-beta-D-ribosyl)-ATP + diphosphate = 5-phospho-alpha-D-ribose 1-diphosphate + ATP. The protein operates within amino-acid biosynthesis; L-histidine biosynthesis; L-histidine from 5-phospho-alpha-D-ribose 1-diphosphate: step 1/9. Feedback inhibited by histidine. In terms of biological role, catalyzes the condensation of ATP and 5-phosphoribose 1-diphosphate to form N'-(5'-phosphoribosyl)-ATP (PR-ATP). Has a crucial role in the pathway because the rate of histidine biosynthesis seems to be controlled primarily by regulation of HisG enzymatic activity. This is ATP phosphoribosyltransferase from Chlorobium phaeovibrioides (strain DSM 265 / 1930) (Prosthecochloris vibrioformis (strain DSM 265)).